We begin with the raw amino-acid sequence, 733 residues long: MGKRVVATDKELKWKKVDIPDTLDDFGGFYGLEEIDGVDVKVVNGQVQFIASEAQVKEEEESSESDFPDFDAMEQEDDGDVEEAEEEEEEEEDVAEADEPEVKQKQEQARVEQIDKGVDSEKHEDEKETPEDDLATNVFDIDVDLSDVGSGELPGWTDTVDLSMTTINGLSNLGFTEMTPIQKLSIPAALEGKDIMGKASTGSGKTLAYGIPIIEKMIKSKDNLRTNGIIFTPTRELAQQVTKHLQNVCSMLLKKNPYMILSLTGGLSIQKQERLLKYDGSARIVVATPGRFLELIEKNEELMKRFAKIDVLVLDEADRLLQDGHFDEFEKILKHLGRIRKSLKNMEYWQTLIYSATFSTDLFDKLANSSWKKKNNSKDESEMESVLKHLMTKINFKSKPMMIDANPEDKISAQIKESLIECAPLERDLYCYYFVTLYPGTTLIFCNSIESVKKLNAYLINLGINSFQIHSSMTQKNRLKNLEKFEAMASKNNHLGKPTVLIASDVAARGLDIKGIKHVVHYHLPHSADTYIHRSGRTARGDNEGVAVMICSPQEAMGPLRKLRRLLASKEQISKSTKNKKWQQTVPLLPIEIDILQQLRERSSLANDIAEHELASRSLRKDSNWLKQAADELGIDMDSDEEDKDIILAKNKNKKMNKTLDKNELKSMKAELTHLLKIPIRKDMRRSYLTGGLVNLADSLVKKRGHHNIIGHEKTDALNVLKKGKSNKKQKTK.

The interval 53–132 (EAQVKEEEES…HEDEKETPED (80 aa)) is disordered. Over residues 58 to 99 (EEEESSESDFPDFDAMEQEDDGDVEEAEEEEEEEEDVAEADE) the composition is skewed to acidic residues. Residues 100–126 (PEVKQKQEQARVEQIDKGVDSEKHEDE) are compositionally biased toward basic and acidic residues. A Q motif motif is present at residues 155–183 (GWTDTVDLSMTTINGLSNLGFTEMTPIQK). Residues 186 to 376 (IPAALEGKDI…ANSSWKKKNN (191 aa)) enclose the Helicase ATP-binding domain. 199 to 206 (ASTGSGKT) provides a ligand contact to ATP. The DEAD box signature appears at 315–318 (DEAD). A Helicase C-terminal domain is found at 428–594 (DLYCYYFVTL…TVPLLPIEID (167 aa)).

This sequence belongs to the DEAD box helicase family. DDX24/MAK5 subfamily.

The protein resides in the nucleus. The protein localises to the nucleolus. The enzyme catalyses ATP + H2O = ADP + phosphate + H(+). Functionally, ATP-binding RNA helicase involved in the biogenesis of 60S ribosomal subunits and is required for the normal formation of 25S and 5.8S rRNAs. This Candida glabrata (strain ATCC 2001 / BCRC 20586 / JCM 3761 / NBRC 0622 / NRRL Y-65 / CBS 138) (Yeast) protein is ATP-dependent RNA helicase MAK5 (MAK5).